Consider the following 398-residue polypeptide: Protochlorophyllide reductase, chloroplastic (398 aa).

The N-terminal 64 residues, 1 to 64 (MALQAASLVS…NQQIGAIRAQ (64 aa)), are a transit peptide targeting the chloroplast.

This sequence belongs to the short-chain dehydrogenases/reductases (SDR) family. POR subfamily.

It localises to the plastid. The protein resides in the chloroplast. The catalysed reaction is chlorophyllide a + NADP(+) = protochlorophyllide a + NADPH + H(+). It functions in the pathway porphyrin-containing compound metabolism; chlorophyll biosynthesis. In terms of biological role, phototransformation of protochlorophyllide (Pchlide) to chlorophyllide (Chlide). In Cucumis sativus (Cucumber), this protein is Protochlorophyllide reductase, chloroplastic (PORA).